Reading from the N-terminus, the 188-residue chain is Acireductone dioxygenase (188 aa).

The Fe(2+) site is built by His97, His99, Glu103, and His141. Ni(2+)-binding residues include His97, His99, Glu103, and His141.

The protein belongs to the acireductone dioxygenase (ARD) family. As to quaternary structure, monomer. Fe(2+) serves as cofactor. It depends on Ni(2+) as a cofactor.

It catalyses the reaction 1,2-dihydroxy-5-(methylsulfanyl)pent-1-en-3-one + O2 = 3-(methylsulfanyl)propanoate + CO + formate + 2 H(+). It carries out the reaction 1,2-dihydroxy-5-(methylsulfanyl)pent-1-en-3-one + O2 = 4-methylsulfanyl-2-oxobutanoate + formate + 2 H(+). It functions in the pathway amino-acid biosynthesis; L-methionine biosynthesis via salvage pathway; L-methionine from S-methyl-5-thio-alpha-D-ribose 1-phosphate: step 5/6. Functionally, catalyzes 2 different reactions between oxygen and the acireductone 1,2-dihydroxy-3-keto-5-methylthiopentene (DHK-MTPene) depending upon the metal bound in the active site. Fe-containing acireductone dioxygenase (Fe-ARD) produces formate and 2-keto-4-methylthiobutyrate (KMTB), the alpha-ketoacid precursor of methionine in the methionine recycle pathway. Ni-containing acireductone dioxygenase (Ni-ARD) produces methylthiopropionate, carbon monoxide and formate, and does not lie on the methionine recycle pathway. In Xanthomonas axonopodis pv. citri (strain 306), this protein is Acireductone dioxygenase.